We begin with the raw amino-acid sequence, 311 residues long: HPr kinase/phosphorylase (311 aa).

Residues histidine 138 and lysine 159 contribute to the active site. 153-160 (GDSGIGKS) contacts ATP. Position 160 (serine 160) interacts with Mg(2+). Residue aspartate 177 is the Proton acceptor; for phosphorylation activity. Proton donor; for dephosphorylation activity of the active site. An important for the catalytic mechanism of both phosphorylation and dephosphorylation region spans residues 201–210 (IEIRGVGIID). Residue glutamate 202 coordinates Mg(2+). The active site involves arginine 243. The interval 264–269 (PVKTGR) is important for the catalytic mechanism of dephosphorylation.

This sequence belongs to the HPrK/P family. Homohexamer. Requires Mg(2+) as cofactor.

The enzyme catalyses [HPr protein]-L-serine + ATP = [HPr protein]-O-phospho-L-serine + ADP + H(+). The catalysed reaction is [HPr protein]-O-phospho-L-serine + phosphate + H(+) = [HPr protein]-L-serine + diphosphate. Functionally, catalyzes the ATP- as well as the pyrophosphate-dependent phosphorylation of a specific serine residue in HPr, a phosphocarrier protein of the phosphoenolpyruvate-dependent sugar phosphotransferase system (PTS). HprK/P also catalyzes the pyrophosphate-producing, inorganic phosphate-dependent dephosphorylation (phosphorolysis) of seryl-phosphorylated HPr (P-Ser-HPr). The two antagonistic activities of HprK/P are regulated by several intracellular metabolites, which change their concentration in response to the absence or presence of rapidly metabolisable carbon sources (glucose, fructose, etc.) in the growth medium. Therefore, by controlling the phosphorylation state of HPr, HPrK/P is a sensor enzyme that plays a major role in the regulation of carbon metabolism and sugar transport: it mediates carbon catabolite repression (CCR), and regulates PTS-catalyzed carbohydrate uptake and inducer exclusion. This is HPr kinase/phosphorylase from Streptococcus pneumoniae (strain 70585).